The following is a 547-amino-acid chain: uncharacterized protein (547 aa).

To B.pertussis prn N-terminal region.

This is an uncharacterized protein from Escherichia coli O157:H7.